Consider the following 312-residue polypeptide: uncharacterized protein (312 aa).

The 58-residue stretch at 8 to 65 folds into the HTH lysR-type domain; sequence PGLTCFEIFLAIAEAGSLGGAARELGLTQQAVSRRLASMEAQIGVRLAIRTTRGSQLT. Positions 25–45 form a DNA-binding region, H-T-H motif; it reads LGGAARELGLTQQAVSRRLAS.

Belongs to the LysR transcriptional regulatory family.

This is an uncharacterized protein from Mycobacterium tuberculosis (strain CDC 1551 / Oshkosh).